A 143-amino-acid polypeptide reads, in one-letter code: uncharacterized protein (143 aa).

The next 4 helical transmembrane spans lie at 7-29 (LFLF…LSLV), 52-74 (FSLY…NTYL), 87-105 (LGVF…LWAG), and 120-142 (WLGI…IRLG).

The protein resides in the cell membrane. This is an uncharacterized protein from Aquifex aeolicus (strain VF5).